We begin with the raw amino-acid sequence, 197 residues long: Guanylate kinase (197 aa).

The 186-residue stretch at 6–191 (SKLIILSGPS…CVAQIEKIIS (186 aa)) folds into the Guanylate kinase-like domain. 13 to 20 (GPSGVGKG) lines the ATP pocket.

It belongs to the guanylate kinase family.

It localises to the cytoplasm. It carries out the reaction GMP + ATP = GDP + ADP. Its function is as follows. Essential for recycling GMP and indirectly, cGMP. The polypeptide is Guanylate kinase (Mesomycoplasma hyopneumoniae (strain 232) (Mycoplasma hyopneumoniae)).